The sequence spans 719 residues: Eukaryotic translation initiation factor 3 subunit B (719 aa).

An RRM domain is found at 60–147; the sequence is NILVVDNLPV…HIFAVNMFDD (88 aa). WD repeat units follow at residues 167-207, 511-553, and 555-598; these read VPGE…KPEL, LKGK…TMAS, and EHFM…LYRI. Residues 675–686 show a composition bias toward basic and acidic residues; sequence EKMERQKLRDGE. Residues 675-698 are disordered; that stretch reads EKMERQKLRDGEASDEEEEYEAKE. Over residues 687–698 the composition is skewed to acidic residues; the sequence is ASDEEEEYEAKE.

It belongs to the eIF-3 subunit B family. Component of the eukaryotic translation initiation factor 3 (eIF-3) complex.

Its subcellular location is the cytoplasm. RNA-binding component of the eukaryotic translation initiation factor 3 (eIF-3) complex, which is involved in protein synthesis of a specialized repertoire of mRNAs and, together with other initiation factors, stimulates binding of mRNA and methionyl-tRNAi to the 40S ribosome. The eIF-3 complex specifically targets and initiates translation of a subset of mRNAs involved in cell proliferation. The polypeptide is Eukaryotic translation initiation factor 3 subunit B (TIF3B1) (Nicotiana tabacum (Common tobacco)).